The sequence spans 446 residues: Cobalamin biosynthesis protein CbiHC (446 aa).

Positions 1-246 (MLLLPSRGKL…MFTPRGYSNK (246 aa)) are cobalt-factor III C(17)-methyltransferase. The interval 247 to 446 (YNIGEKRRAE…CLIEHADRPD (200 aa)) is cobalt-precorrin-8 methylmutase.

The protein in the N-terminal section; belongs to the precorrin methyltransferase family. It in the C-terminal section; belongs to the CobH family.

It carries out the reaction Co(II)-factor III + S-adenosyl-L-methionine + H(+) = Co(II)-factor IV + S-adenosyl-L-homocysteine. The enzyme catalyses Co-precorrin-8X = cob(II)yrinate. The protein operates within cofactor biosynthesis; adenosylcobalamin biosynthesis; cob(II)yrinate a,c-diamide from sirohydrochlorin (anaerobic route): step 3/10. Its pathway is cofactor biosynthesis; adenosylcobalamin biosynthesis; cob(II)yrinate a,c-diamide from sirohydrochlorin (anaerobic route): step 9/10. Bifunctional enzyme with a methyltransferase domain that catalyzes the ring contraction and methylation of C-17 in cobalt-factor III to form cobalt-factor IV, and an isomerase domain that catalyzes the conversion of cobalt-precorrin-8 to cobyrinate. In Archaeoglobus fulgidus (strain ATCC 49558 / DSM 4304 / JCM 9628 / NBRC 100126 / VC-16), this protein is Cobalamin biosynthesis protein CbiHC (cbiHC).